The following is a 31-amino-acid chain: Sarcolipin (31 aa).

The Cytoplasmic portion of the chain corresponds to 1–7 (MERSTQE). The chain crosses the membrane as a helical span at residues 8 to 26 (LFINFTVVLITVLLMWLLV). Over 27 to 31 (RSYQY) the chain is Lumenal.

It belongs to the sarcolipin family. Homooligomer. Can also form heterooligomers with other sarcoplasmic/endoplasmic reticulum calcium ATPase (SERCA) regulators ARLN, ERLN, PLN and STRIT1/DWORF. Monomer. Interacts with calcium ATPase ATP2A1/SERCA1. Interacts as a monomer with ATP2A2/SERCA2; the interaction decreases ATP2A2 Ca(2+) affinity. Interacts with VMP1; VMP1 competes with PLN and SLN to prevent them from forming an inhibitory complex with ATP2A2.

It localises to the sarcoplasmic reticulum membrane. The protein resides in the endoplasmic reticulum membrane. Its function is as follows. Reversibly inhibits the activity of ATP2A1/SERCA1 and ATP2A2/SERCA2 in sarcoplasmic reticulum by decreasing the apparent affinity of the ATPase for Ca(2+). Also inhibits the activity of ATP2A3/SERCA3. Modulates calcium re-uptake during muscle relaxation and plays an important role in calcium homeostasis in muscle. Required for muscle-based, non-shivering thermogenesis. The protein is Sarcolipin (Sln) of Rattus norvegicus (Rat).